A 633-amino-acid polypeptide reads, in one-letter code: Probable methyltransferase PMT15 (633 aa).

Residues 1 to 24 (MGNYRWPSKLSKLSLRAKQTNLYR) are Cytoplasmic-facing. Residues 25-45 (VILIAILCVTFYFVGVWQHSG) traverse the membrane as a helical; Signal-anchor for type II membrane protein segment. The Lumenal portion of the chain corresponds to 46–633 (RGISRSSISN…APAPDQSSDP (588 aa)). N-linked (GlcNAc...) asparagine glycosylation is found at N113 and N298.

This sequence belongs to the methyltransferase superfamily.

It localises to the golgi apparatus membrane. This chain is Probable methyltransferase PMT15, found in Arabidopsis thaliana (Mouse-ear cress).